Here is a 468-residue protein sequence, read N- to C-terminus: MSLISAGRVCARILGAKNSPCALIAARQASSSTNLKDVLSDLIPKEQTRIKNFKQQHGKTVIGQVTVDMVYGGMRGMKGLVYETSVLDPDEGIRFRGYSIPECQKLLPKAPGGEEPLPEGLFWLLVTGEVPNQDQVNWISKEWAKRAALPSHVVTMLDNFPTNLHPMSQLSAAITALNSESNFARAYAEGVNKAKYWELVYEDSMDLIAKLPCVAAKIYRNLYREGSSIGAIDSNLDWSDNFTNMLGYTDQQFTELMRLYLTIHSDHEGGNVSAHTSHLVGSALSDPYLSFSAAMNGLAGPLHGLANQEVLVWLTSLQKDLGGEVSDEKLRDYIWNTLNSGRVVPGYGHAVLRKTDPRYTCQREFALKHLPDDPMFKLVAQLYKIVPNILLEQGKAKNPWPNVDAHSGVLLQYYGMTEMNYYTVLFGVSRALGVLSQLIWSRALGFPLERPKSMSTDGLMQLVGSKSG.

Residues 1 to 30 constitute a mitochondrion transit peptide; sequence MSLISAGRVCARILGAKNSPCALIAARQAS. Residues H303 and H349 contribute to the active site. R358 is an oxaloacetate binding site. The active site involves D404. Positions 430 and 450 each coordinate oxaloacetate.

Belongs to the citrate synthase family. In terms of assembly, homodimer.

Its subcellular location is the mitochondrion matrix. The enzyme catalyses oxaloacetate + acetyl-CoA + H2O = citrate + CoA + H(+). It participates in carbohydrate metabolism; tricarboxylic acid cycle; isocitrate from oxaloacetate: step 1/2. In terms of biological role, key enzyme of the Krebs tricarboxylic acid cycle which catalyzes the synthesis of citrate from acetyl coenzyme A and oxaloacetate. The sequence is that of Citrate synthase, mitochondrial (cs) from Xenopus laevis (African clawed frog).